We begin with the raw amino-acid sequence, 210 residues long: Pyridoxine/pyridoxamine 5'-phosphate oxidase (210 aa).

Residues 7–10 (RDEY) and K65 each bind substrate. FMN-binding positions include 60 to 65 (RMVLLK), 75 to 76 (FT), R81, K82, and Q104. 3 residues coordinate substrate: Y122, R126, and S130. FMN-binding positions include 139 to 140 (QS) and W183. 189–191 (RLH) is a binding site for substrate. Residue R193 coordinates FMN.

The protein belongs to the pyridoxamine 5'-phosphate oxidase family. As to quaternary structure, homodimer. The cofactor is FMN.

The catalysed reaction is pyridoxamine 5'-phosphate + O2 + H2O = pyridoxal 5'-phosphate + H2O2 + NH4(+). It carries out the reaction pyridoxine 5'-phosphate + O2 = pyridoxal 5'-phosphate + H2O2. It functions in the pathway cofactor metabolism; pyridoxal 5'-phosphate salvage; pyridoxal 5'-phosphate from pyridoxamine 5'-phosphate: step 1/1. The protein operates within cofactor metabolism; pyridoxal 5'-phosphate salvage; pyridoxal 5'-phosphate from pyridoxine 5'-phosphate: step 1/1. Its function is as follows. Catalyzes the oxidation of either pyridoxine 5'-phosphate (PNP) or pyridoxamine 5'-phosphate (PMP) into pyridoxal 5'-phosphate (PLP). This chain is Pyridoxine/pyridoxamine 5'-phosphate oxidase, found in Haemophilus influenzae (strain 86-028NP).